The following is a 593-amino-acid chain: Calnexin (593 aa).

The signal sequence occupies residues 1–20 (MEGKWLLCMLLVLGTTIVQA). Residues 21 to 482 (HEGHDDDMID…QMIEAAEERP (462 aa)) lie on the Lumenal side of the membrane. Residues S75 and D118 each coordinate Ca(2+). Residue K138 is modified to N6-acetyllysine. The cysteines at positions 161 and 195 are disulfide-linked. Residues Y165, K167, Y186, and D193 each coordinate an alpha-D-glucoside. Positions 261-346 (GNLLNDMTPP…AEKPEDWDED (86 aa)) are disordered. Positions 277 to 410 (IEDPEDQKPE…RKIPNPDFFE (134 aa)) are p domain (Extended arm). 5 tandem repeats follow at residues 279 to 290 (DPEDQKPEDWDE), 296 to 307 (DPDAVKPDDWNE), 315 to 326 (DEEATKPDGWLD), 334 to 345 (DPDAEKPEDWDE), and 349 to 359 (GEWEAPQIANP). 4 X approximate repeats regions lie at residues 279-345 (DPED…DWDE) and 349-406 (GEWE…IPNP). Basic and acidic residues predominate over residues 282-320 (DQKPEDWDERPKIPDPDAVKPDDWNEDAPAKIPDEEATK). The segment covering 324 to 346 (WLDDEPEYVPDPDAEKPEDWDED) has biased composition (acidic residues). The interval 327 to 360 (DEPEYVPDPDAEKPEDWDEDMDGEWEAPQIANPK) is interaction with PPIB. C361 and C367 are joined by a disulfide. 3 tandem repeats follow at residues 368–378 (GVWQRPMIDNP), 382–392 (GKWKPPMIDNP), and 396–406 (GIWKPRKIPNP). Position 426 (E426) interacts with an alpha-D-glucoside. D437 provides a ligand contact to Ca(2+). The chain crosses the membrane as a helical span at residues 483-503 (WLWVVYVLTVALPVFLVILFC). Residues C503 and C504 are each lipidated (S-palmitoyl cysteine). Residues 504-593 (CSGKKQSSPV…SPRNRKPRRE (90 aa)) lie on the Cytoplasmic side of the membrane. The interval 504–593 (CSGKKQSSPV…SPRNRKPRRE (90 aa)) is sufficient to mediate interaction with SGIP1. Residues 511–593 (SPVEYKKTDA…SPRNRKPRRE (83 aa)) form a disordered region. The span at 526–548 (KEEEEEKEEEKDKGDEEEEGEEK) shows a compositional bias: acidic residues. S555 bears the Phosphoserine mark. Position 563 is a phosphothreonine (T563). Position 565 is a phosphoserine; by MAPK3 (S565). S584 is subject to Phosphoserine.

It belongs to the calreticulin family. Interacts with MAPK3/ERK1. Interacts with KCNH2. Associates with ribosomes. Interacts with SGIP1; involved in negative regulation of endocytosis. The palmitoylated form interacts with the ribosome-translocon complex component SSR1, promoting efficient folding of glycoproteins. Interacts with SERPINA2P/SERPINA2 and with the S and Z variants of SERPINA1. Interacts with PPIB. Interacts with ZNRF4. Interacts with SMIM22. Interacts with TMX2. Interacts with TMEM35A/NACHO and CHRNA7. Interacts with reticulophagy regulators RETREG2 and RETREG3. Interacts with DNM1L; may form part of a larger protein complex at the ER-mitochondrial interface during mitochondrial fission. Interacts with ADAM7. In terms of processing, phosphorylated at Ser-565 by MAPK3/ERK1. Phosphorylation by MAPK3/ERK1 increases its association with ribosomes. Post-translationally, palmitoylation by DHHC6 leads to the preferential localization to the perinuclear rough ER. It mediates the association of calnexin with the ribosome-translocon complex (RTC) which is required for efficient folding of glycosylated proteins. Ubiquitinated, leading to proteasomal degradation. Probably ubiquitinated by ZNRF4.

Its subcellular location is the endoplasmic reticulum membrane. The protein localises to the mitochondrion membrane. It localises to the melanosome membrane. Calcium-binding protein that interacts with newly synthesized monoglucosylated glycoproteins in the endoplasmic reticulum. It may act in assisting protein assembly and/or in the retention within the ER of unassembled protein subunits. It seems to play a major role in the quality control apparatus of the ER by the retention of incorrectly folded proteins. Associated with partial T-cell antigen receptor complexes that escape the ER of immature thymocytes, it may function as a signaling complex regulating thymocyte maturation. Additionally it may play a role in receptor-mediated endocytosis at the synapse. The chain is Calnexin (CANX) from Canis lupus familiaris (Dog).